We begin with the raw amino-acid sequence, 376 residues long: Chaperone protein DnaJ 2 (376 aa).

One can recognise a J domain in the interval 8 to 72 (DYYEILGVPR…EKRKLYDMYG (65 aa)). The CR-type zinc-finger motif lies at 143 to 219 (GTTVPIEVER…CTGRGYGLVK (77 aa)). The Zn(2+) site is built by Cys-156, Cys-159, Cys-172, Cys-175, Cys-194, Cys-197, Cys-207, and Cys-210. 4 CXXCXGXG motif repeats span residues 156 to 163 (CSACGGTG), 172 to 179 (CPTCGGRG), 194 to 201 (CPTCGGEG), and 207 to 214 (CHACTGRG).

This sequence belongs to the DnaJ family. As to quaternary structure, homodimer. It depends on Zn(2+) as a cofactor.

It localises to the cytoplasm. Participates actively in the response to hyperosmotic and heat shock by preventing the aggregation of stress-denatured proteins and by disaggregating proteins, also in an autonomous, DnaK-independent fashion. Unfolded proteins bind initially to DnaJ; upon interaction with the DnaJ-bound protein, DnaK hydrolyzes its bound ATP, resulting in the formation of a stable complex. GrpE releases ADP from DnaK; ATP binding to DnaK triggers the release of the substrate protein, thus completing the reaction cycle. Several rounds of ATP-dependent interactions between DnaJ, DnaK and GrpE are required for fully efficient folding. Also involved, together with DnaK and GrpE, in the DNA replication of plasmids through activation of initiation proteins. The protein is Chaperone protein DnaJ 2 of Aquifex aeolicus (strain VF5).